Reading from the N-terminus, the 282-residue chain is Probable protein phosphatase 2C 10 (282 aa).

In terms of domain architecture, PPM-type phosphatase spans 34-281; that stretch reads KFGYSLVKGK…DDISCIVVRL (248 aa). Mn(2+) is bound by residues Asp71, Gly72, Asp233, and Asp272.

It belongs to the PP2C family. Requires Mg(2+) as cofactor. The cofactor is Mn(2+).

The enzyme catalyses O-phospho-L-seryl-[protein] + H2O = L-seryl-[protein] + phosphate. It carries out the reaction O-phospho-L-threonyl-[protein] + H2O = L-threonyl-[protein] + phosphate. This is Probable protein phosphatase 2C 10 from Arabidopsis thaliana (Mouse-ear cress).